Consider the following 441-residue polypeptide: Myocyte-specific enhancer factor 2C (441 aa).

The MADS-box domain occupies 1–61; that stretch reads MGRKKIQITR…NKLFQYASTD (61 aa). Position 4 is an N6-acetyllysine (Lys4). Residues 58–86 constitute a DNA-binding region (mef2-type); it reads ASTDMDKVLLKYTEYNEPHESRTNSDIVE. At Ser59 the chain carries Phosphoserine; by CK2. Residues 91-116 form a disordered region; sequence KGLNGCDSPDPDADDSVGHSPESEDK. Phosphoserine occurs at positions 98, 106, and 110. 2 positions are modified to N6-acetyllysine: Lys116 and Lys119. Residues 180-224 are disordered; sequence NSMSPGVTHRPPSAGNTGGLMGGDLTSGAGTSAGNGYGNPRNSPG. Ser222 and Ser228 each carry phosphoserine. An N6-acetyllysine mark is found at Lys234 and Lys239. Phosphoserine is present on Ser240. An N6-acetyllysine mark is found at Lys252 and Lys264. The interval 271 to 278 is beta domain; that stretch reads SEDVDLLL. Phosphothreonine; by MAPK7 and MAPK14 is present on residues Thr293 and Thr300. The disordered stretch occupies residues 353-441; sequence QHLHSMPPSA…RMRLSEGWAT (89 aa). A compositionally biased stretch (polar residues) spans 362–377; sequence ALSQLGDRTTTPSRYP. Ser387 is subject to Phosphoserine; by MAPK7. Residues 387 to 400 are compositionally biased toward low complexity; the sequence is SPVDSLSSCSSSYD. A compositionally biased stretch (basic and acidic residues) spans 401 to 411; that stretch reads GSDREDHRNEF. The residue at position 413 (Ser413) is a Phosphoserine.

Belongs to the MEF2 family. In terms of assembly, forms a complex with class II HDACs in undifferentiating cells. On myogenic differentiation, HDACs are released into the cytoplasm allowing MEF2s to interact with other proteins for activation. Interacts with EP300 in differentiating cells; the interaction acetylates MEF2C leading to increased DNA binding and activation. Interacts with HDAC7 and CARM1. Interacts with HDAC4, HDAC7 and HDAC9; the interaction with HDACs represses transcriptional activity. Interacts with LPIN1. Interacts with MYOCD. Interacts with AKAP13. Interacts with FOXK1; the interaction inhibits MEF2C transactivation activity. Interacts (via N-terminus) with HABP4; this interaction decreases DNA-binding activity of MEF2C in myocardial cells in response to mechanical stress. Interacts with JPH2; interaction specifically takes place with the Junctophilin-2 N-terminal fragment cleavage product of JPH2. Interacts (via MADS box) with SOX18. Interacts with PHF7; the interaction promotes MEF2C binding to its transcription targets. Phosphorylation on Ser-59 enhances DNA binding activity. Post-translationally, acetylated by p300 on several sites in diffentiating myocytes. Acetylation on Lys-4 increases DNA binding and transactivation. In terms of processing, proteolytically cleaved in cerebellar granule neurons, probably by caspase 7, following neurotoxicity.

The protein resides in the nucleus. It is found in the cytoplasm. The protein localises to the sarcoplasm. In terms of biological role, transcription activator which binds specifically to the MEF2 element present in the regulatory regions of many muscle-specific genes. Controls cardiac morphogenesis and myogenesis, and is also involved in vascular development. Enhances transcriptional activation mediated by SOX18. Plays an essential role in hippocampal-dependent learning and memory by suppressing the number of excitatory synapses and thus regulating basal and evoked synaptic transmission. Crucial for normal neuronal development, distribution, and electrical activity in the neocortex. Necessary for proper development of megakaryocytes and platelets and for bone marrow B-lymphopoiesis. Required for B-cell survival and proliferation in response to BCR stimulation, efficient IgG1 antibody responses to T-cell-dependent antigens and for normal induction of germinal center B-cells. May also be involved in neurogenesis and in the development of cortical architecture. This Bos taurus (Bovine) protein is Myocyte-specific enhancer factor 2C.